The chain runs to 153 residues: Arginine repressor (153 aa).

Belongs to the ArgR family.

The protein resides in the cytoplasm. The protein operates within amino-acid biosynthesis; L-arginine biosynthesis [regulation]. Regulates arginine biosynthesis genes. This chain is Arginine repressor, found in Acetivibrio thermocellus (strain ATCC 27405 / DSM 1237 / JCM 9322 / NBRC 103400 / NCIMB 10682 / NRRL B-4536 / VPI 7372) (Clostridium thermocellum).